The sequence spans 444 residues: Glutamate-1-semialdehyde 2,1-aminomutase (444 aa).

K278 bears the N6-(pyridoxal phosphate)lysine mark.

Belongs to the class-III pyridoxal-phosphate-dependent aminotransferase family. HemL subfamily. Homodimer. The cofactor is pyridoxal 5'-phosphate.

Its subcellular location is the cytoplasm. The catalysed reaction is (S)-4-amino-5-oxopentanoate = 5-aminolevulinate. The protein operates within porphyrin-containing compound metabolism; protoporphyrin-IX biosynthesis; 5-aminolevulinate from L-glutamyl-tRNA(Glu): step 2/2. The protein is Glutamate-1-semialdehyde 2,1-aminomutase of Deinococcus radiodurans (strain ATCC 13939 / DSM 20539 / JCM 16871 / CCUG 27074 / LMG 4051 / NBRC 15346 / NCIMB 9279 / VKM B-1422 / R1).